We begin with the raw amino-acid sequence, 341 residues long: Ubiquinone biosynthesis protein COQ4, mitochondrial (341 aa).

A mitochondrion-targeting transit peptide spans 1–16; that stretch reads MLSRISSVRIGTQVRQ. Positions 220, 221, 224, and 236 each coordinate Zn(2+).

It belongs to the COQ4 family. Component of a multi-subunit COQ enzyme complex, composed of at least COQ3, COQ4, COQ5, COQ6, COQ7 and COQ9. It depends on Zn(2+) as a cofactor.

It is found in the mitochondrion inner membrane. It catalyses the reaction a 4-hydroxy-3-methoxy-5-(all-trans-polyprenyl)benzoate + H(+) = a 2-methoxy-6-(all-trans-polyprenyl)phenol + CO2. It participates in cofactor biosynthesis; ubiquinone biosynthesis. In terms of biological role, lyase that catalyzes the C1-decarboxylation of 4-hydroxy-3-methoxy-5-(all-trans-polyprenyl)benzoic acid into 2-methoxy-6-(all-trans-polyprenyl)phenol during ubiquinone biosynthesis. The chain is Ubiquinone biosynthesis protein COQ4, mitochondrial from Vanderwaltozyma polyspora (strain ATCC 22028 / DSM 70294 / BCRC 21397 / CBS 2163 / NBRC 10782 / NRRL Y-8283 / UCD 57-17) (Kluyveromyces polysporus).